A 216-amino-acid chain; its full sequence is Uracil phosphoribosyltransferase (216 aa).

5-phospho-alpha-D-ribose 1-diphosphate contacts are provided by residues Arg81, Arg106, and 135 to 143 (DPMLATGSS). Residues Ile200 and 205–207 (GDA) each bind uracil. Asp206 contributes to the 5-phospho-alpha-D-ribose 1-diphosphate binding site.

This sequence belongs to the UPRTase family. Mg(2+) is required as a cofactor.

It catalyses the reaction UMP + diphosphate = 5-phospho-alpha-D-ribose 1-diphosphate + uracil. The protein operates within pyrimidine metabolism; UMP biosynthesis via salvage pathway; UMP from uracil: step 1/1. With respect to regulation, allosterically activated by GTP. Its function is as follows. Catalyzes the conversion of uracil and 5-phospho-alpha-D-ribose 1-diphosphate (PRPP) to UMP and diphosphate. The chain is Uracil phosphoribosyltransferase (upp) from Porphyromonas gingivalis (strain ATCC 33277 / DSM 20709 / CIP 103683 / JCM 12257 / NCTC 11834 / 2561).